A 62-amino-acid chain; its full sequence is Defensin BmKDfsin5 (62 aa).

A signal peptide spans 1-24 (MKVIALFFLFAFIFCTLEVAIVEA). 3 disulfide bridges follow: Cys-28-Cys-49, Cys-35-Cys-57, and Cys-39-Cys-59.

The protein belongs to the invertebrate defensin family. Type 2 subfamily. In terms of tissue distribution, highly expressed in non-venom gland (hemolymph) and moderately expressed in venom gland.

The protein resides in the secreted. Antibacterial peptide active against Gram-positive bacteria (including S.aureus ATCC25923 (MIC=2.5 uM), M.luteus AB93113 (MIC=2.5 uM), and the antibiotic-resistant S.epidermidis PRSE P1389 (MIC=1.25 uM)), but not against Gram-negative bacteria (including E.coli and P.aeruginosa). Also has weak blocking activity on Kv1.1/KCNA1 (8.7% inhibition), Kv1.2/KCNA2 (10.2% inhibition), Kv1.3/KCNA3 (9.0% inhibition), KCa3.1/KCNN4/IK (9.1% inhibition), KCa2.3/KCNN3/SK3 (46.3% inhibition) and Kv11.1/KCNH2/ERG1 (16.9% inhibition) channels (tested at 1 uM). It inhibits potassium channel current by interacting with the pore region. This chain is Defensin BmKDfsin5, found in Olivierus martensii (Manchurian scorpion).